Consider the following 161-residue polypeptide: V-type proton ATPase 16 kDa proteolipid subunit c (161 aa).

Topologically, residues Met1–Pro15 are lumenal. The helical transmembrane segment at Phe16 to Gly36 threads the bilayer. At Thr37 to Ser58 the chain is on the cytoplasmic side. Residues Val59 to Leu79 form a helical membrane-spanning segment. The Lumenal portion of the chain corresponds to Arg80–His98. The helical transmembrane segment at Leu99–Val119 threads the bilayer. The Cytoplasmic segment spans residues Gly120–Met137. The helical transmembrane segment at Ile138–Leu158 threads the bilayer. Topologically, residues Gly159–Ser161 are lumenal.

Belongs to the V-ATPase proteolipid subunit family. V-ATPase is a heteromultimeric enzyme made up of two complexes: the ATP-hydrolytic V1 complex and the proton translocation V0 complex. The V1 complex consists of three catalytic AB heterodimers that form a heterohexamer, three peripheral stalks each consisting of EG heterodimers, one central rotor including subunits D and F, and the regulatory subunits C and H. The proton translocation complex V0 consists of the proton transport subunit a, a ring of proteolipid subunits c9c'', rotary subunit d, subunits e and f, and the accessory subunits vah-19/Ac45 and vah-20/PRR.

The protein localises to the membrane. Its function is as follows. Proton-conducting pore forming subunit of the V0 complex of vacuolar(H+)-ATPase (V-ATPase), a multisubunit enzyme composed of a peripheral complex (V1) that hydrolyzes ATP and a membrane integral complex (V0) that translocates protons. V-ATPase is responsible for acidifying and maintaining the pH of intracellular compartments and in some cell types, is targeted to the plasma membrane, where it is responsible for acidifying the extracellular environment. The chain is V-type proton ATPase 16 kDa proteolipid subunit c (12) from Ascaris suum (Pig roundworm).